The following is a 469-amino-acid chain: Calcium-binding mitochondrial carrier protein SCaMC-2-A (469 aa).

The Mitochondrial intermembrane portion of the chain corresponds to 1 to 189 (MLCLCLYVPV…EHLTGMWWRH (189 aa)). EF-hand domains are found at residues 47–80 (TYRR…QDHE), 78–113 (DHEK…LGVH), and 114–149 (ISLK…QPAE). Ca(2+) contacts are provided by Asp-64, Gln-66, and Glu-71. Solcar repeat units lie at residues 184-270 (GMWW…IKRV), 278-363 (LGIS…LKNT), and 375-463 (PGVF…IKST). A helical membrane pass occupies residues 190 to 207 (LVSGGGAGAVSRTCTAPL). The Mitochondrial matrix portion of the chain corresponds to 208–244 (DRLKVLMQVHGCQGKSMCLMSGLTQMIKEGGVRSLWR). The chain crosses the membrane as a helical span at residues 245–264 (GNGINVIKIAPETALKFMAY). Residues 265–287 (EQIKRVMGSSQETLGISERFVAG) are Mitochondrial intermembrane-facing. The chain crosses the membrane as a helical span at residues 288-301 (SLAGVIAQSTIYPM). At 302–337 (EVLKTRLALRKTGQYKGISDCAKHILKTEGMSAFYK) the chain is on the mitochondrial matrix side. The helical transmembrane segment at 338-357 (GYVPNMLGIIPYAGIDLAVY) threads the bilayer. At 358–380 (ETLKNTWLQRYGTENADPGVFVL) the chain is on the mitochondrial intermembrane side. Residues 381–398 (LACGTVSSTCGQLASYPL) form a helical membrane-spanning segment. The Mitochondrial matrix segment spans residues 399–437 (ALIRTRMQAQASVEGSSQVSMTGLFKQIMKTEGPTGLYR). A helical transmembrane segment spans residues 438 to 457 (GLTPNFLKVIPAVSISYVVY). Residues 458–469 (EHIKSTLGVRSR) lie on the Mitochondrial intermembrane side of the membrane.

It belongs to the mitochondrial carrier (TC 2.A.29) family.

Its subcellular location is the mitochondrion inner membrane. Calcium-dependent mitochondrial solute carrier. This Danio rerio (Zebrafish) protein is Calcium-binding mitochondrial carrier protein SCaMC-2-A (slc25a25a).